The primary structure comprises 580 residues: Frizzled-10-B (580 aa).

The first 20 residues, 1–20, serve as a signal peptide directing secretion; sequence MEPRVVTALLLSLAAALCSG. Residues 21 to 224 are Extracellular-facing; sequence ISSINPDRSG…DVYWSKNDKK (204 aa). The 122-residue stretch at 29-150 folds into the FZ domain; it reads SGEGRCQAIE…NDPNYLCMEA (122 aa). Intrachain disulfides connect Cys34/Cys95, Cys42/Cys88, Cys79/Cys117, Cys106/Cys147, and Cys110/Cys134. N-linked (GlcNAc...) asparagine glycosylation is present at Asn48. N-linked (GlcNAc...) asparagine glycosylation occurs at Asn153. The interval 173 to 194 is disordered; that stretch reads RPNSGHEMYPKDPKGRSSCENS. A compositionally biased stretch (basic and acidic residues) spans 180 to 189; the sequence is MYPKDPKGRS. A helical membrane pass occupies residues 225–245; the sequence is FAFIWIAIWSLLCFFSSAFTV. Over 246 to 261 the chain is Cytoplasmic; the sequence is LTFLVDPLRFKYPERP. Residues 262 to 282 form a helical membrane-spanning segment; it reads IIFLSMCYCVYSVGYIIRLFA. The Extracellular segment spans residues 283-309; it reads GADSIACDRDSGQLYVIQEGLESTGCT. The chain crosses the membrane as a helical span at residues 310-330; it reads IVFLILYYFGMASSLWWVILT. Over 331 to 350 the chain is Cytoplasmic; that stretch reads LTWFLAAGKKWGHEAIEANS. The chain crosses the membrane as a helical span at residues 351 to 371; sequence SYFHLAAWAIPAVKTIMILVM. The Extracellular segment spans residues 372 to 392; that stretch reads RRVAGDELTGVCYVGSMDVNA. A helical membrane pass occupies residues 393 to 413; sequence LTGFVLIPLACYLIIGTSFIL. At 414–442 the chain is on the cytoplasmic side; the sequence is SGFVALFHIRRVMKTGGENTDKLEKLMVR. Residues 443-463 traverse the membrane as a helical segment; it reads IGVFSVLYTVPATCVIACYFY. Over 464–501 the chain is Extracellular; that stretch reads ERLNMDFWKILATQDKCKMDSQTKTLDCTMTSSIPAVE. Residues 502–522 traverse the membrane as a helical segment; it reads IFMVKIFMLLVVGITSGMWIW. Over 523–580 the chain is Cytoplasmic; sequence TSKTVQSWQNVFSKSLKKRNRNKPASVITSAGIYKKPQQPPKIHHGKYESALRSPTCV. A Lys-Thr-X-X-X-Trp motif, mediates interaction with the PDZ domain of Dvl family members motif is present at residues 525–530; it reads KTVQSW. Residues 558–580 form a disordered region; that stretch reads KPQQPPKIHHGKYESALRSPTCV. The PDZ-binding signature appears at 578–580; sequence TCV.

Belongs to the G-protein coupled receptor Fz/Smo family. As to expression, expressed in liver, lung, brain, testis, heart and ovary.

The protein localises to the cell membrane. Functionally, receptor for Wnt proteins. Most of frizzled receptors are coupled to the beta-catenin canonical signaling pathway, which leads to the activation of disheveled proteins, inhibition of GSK-3 kinase, nuclear accumulation of beta-catenin and activation of Wnt target genes. A second signaling pathway involving PKC and calcium fluxes has been seen for some family members, but it is not yet clear if it represents a distinct pathway or if it can be integrated in the canonical pathway, as PKC seems to be required for Wnt-mediated inactivation of GSK-3 kinase. Both pathways seem to involve interactions with G-proteins. May be involved in transduction and intercellular transmission of polarity information during tissue morphogenesis and/or in differentiated tissues. Activated by Wnt8. Could have an antagonizing activity in the morphogenesis during development. This is Frizzled-10-B (fzd10-b) from Xenopus laevis (African clawed frog).